Reading from the N-terminus, the 627-residue chain is UvrABC system protein C (627 aa).

Residues 26–105 form the GIY-YIG domain; that stretch reads PEPGVYFMRD…IKQHQPYFNV (80 aa). The UVR domain maps to 215–250; that stretch reads QELIDILSEQMEKAAEALNFEVAARIRDQIAGLKSL.

This sequence belongs to the UvrC family. Interacts with UvrB in an incision complex.

The protein resides in the cytoplasm. Its function is as follows. The UvrABC repair system catalyzes the recognition and processing of DNA lesions. UvrC both incises the 5' and 3' sides of the lesion. The N-terminal half is responsible for the 3' incision and the C-terminal half is responsible for the 5' incision. The protein is UvrABC system protein C of Trichormus variabilis (strain ATCC 29413 / PCC 7937) (Anabaena variabilis).